A 328-amino-acid polypeptide reads, in one-letter code: L-lactate dehydrogenase (328 aa).

NAD(+) contacts are provided by residues Val18, Glu39, Lys46, Tyr71, and 85 to 86; that span reads GA. Substrate contacts are provided by Gln88 and Arg94. NAD(+)-binding positions include Ser107, 124-126, and Ser149; that span reads AAN. 126–129 lines the substrate pocket; it reads NPVD. 154–157 contributes to the substrate binding site; that stretch reads DSAR. Beta-D-fructose 1,6-bisphosphate contacts are provided by Arg159 and His174. The active-site Proton acceptor is the His181. Tyr226 bears the Phosphotyrosine mark. Residue Thr235 coordinates substrate.

Belongs to the LDH/MDH superfamily. LDH family. As to quaternary structure, homotetramer.

It localises to the cytoplasm. The catalysed reaction is (S)-lactate + NAD(+) = pyruvate + NADH + H(+). The protein operates within fermentation; pyruvate fermentation to lactate; (S)-lactate from pyruvate: step 1/1. Its activity is regulated as follows. Allosterically activated by fructose 1,6-bisphosphate (FBP). Catalyzes the conversion of lactate to pyruvate. This Streptococcus pneumoniae (strain ATCC BAA-255 / R6) protein is L-lactate dehydrogenase.